We begin with the raw amino-acid sequence, 147 residues long: Protegrin-2 (147 aa).

Residues 1 to 29 form the signal peptide; it reads METQRASLCLGRWSLWLLLLALVVPSASA. A propeptide spanning residues 30–130 is cleaved from the precursor; that stretch reads QALSYREAVL…DITCNEVQGV (101 aa). The disordered stretch occupies residues 61–80; sequence DQPPKADEDPGTPKPVSFTV. 4 disulfide bridges follow: C85–C96, C107–C124, C136–C145, and C138–C143. Position 146 is a valine amide (V146).

It belongs to the cathelicidin family.

The protein localises to the secreted. Functionally, microbicidal activity. Active against E.coli, Listeria monocytogenes and C.albicans, in vitro. This chain is Protegrin-2 (NPG2), found in Sus scrofa (Pig).